A 263-amino-acid chain; its full sequence is Imidazole glycerol phosphate synthase subunit HisF (263 aa).

Active-site residues include Asp11 and Asp130.

It belongs to the HisA/HisF family. As to quaternary structure, heterodimer of HisH and HisF.

Its subcellular location is the cytoplasm. It carries out the reaction 5-[(5-phospho-1-deoxy-D-ribulos-1-ylimino)methylamino]-1-(5-phospho-beta-D-ribosyl)imidazole-4-carboxamide + L-glutamine = D-erythro-1-(imidazol-4-yl)glycerol 3-phosphate + 5-amino-1-(5-phospho-beta-D-ribosyl)imidazole-4-carboxamide + L-glutamate + H(+). It functions in the pathway amino-acid biosynthesis; L-histidine biosynthesis; L-histidine from 5-phospho-alpha-D-ribose 1-diphosphate: step 5/9. IGPS catalyzes the conversion of PRFAR and glutamine to IGP, AICAR and glutamate. The HisF subunit catalyzes the cyclization activity that produces IGP and AICAR from PRFAR using the ammonia provided by the HisH subunit. The chain is Imidazole glycerol phosphate synthase subunit HisF from Herpetosiphon aurantiacus (strain ATCC 23779 / DSM 785 / 114-95).